The primary structure comprises 330 residues: MHNNNRIVITPGEPAGVGPDLVAALAQQDWPVELVVCADPALLLERARQLDLPLQLRTYQPQQPAQPQRAGTLTVLPVATAHPVVAGELNVGNSAYVVETLARACDGCLNGEFAALITGPVNKGVINDAGVPFIGHTEFFADRSGCDRVVMMLATEELRVALATTHLPLLAVPGAITRQSLHEVIRILDHDLKTKFGLAQPQIYVCGLNPHAGEGGHMGREEIDTIIPALDELRAEGITLIGPLPADTLFQPKYLQHADAVLAMYHDQGLPVLKYQGFGRAVNITLGLPFIRTSVDHGTALELAGTGTADAGSFKTALNLAIKMIINCNE.

H136 and T137 together coordinate substrate. 3 residues coordinate a divalent metal cation: H166, H211, and H266. Substrate contacts are provided by K274, N283, and R292.

This sequence belongs to the PdxA family. In terms of assembly, homodimer. Zn(2+) is required as a cofactor. It depends on Mg(2+) as a cofactor. Requires Co(2+) as cofactor.

Its subcellular location is the cytoplasm. The catalysed reaction is 4-(phosphooxy)-L-threonine + NAD(+) = 3-amino-2-oxopropyl phosphate + CO2 + NADH. The protein operates within cofactor biosynthesis; pyridoxine 5'-phosphate biosynthesis; pyridoxine 5'-phosphate from D-erythrose 4-phosphate: step 4/5. Catalyzes the NAD(P)-dependent oxidation of 4-(phosphooxy)-L-threonine (HTP) into 2-amino-3-oxo-4-(phosphooxy)butyric acid which spontaneously decarboxylates to form 3-amino-2-oxopropyl phosphate (AHAP). The chain is 4-hydroxythreonine-4-phosphate dehydrogenase from Serratia proteamaculans (strain 568).